The sequence spans 242 residues: Probable septum site-determining protein MinC (242 aa).

It belongs to the MinC family. Interacts with MinD and FtsZ.

In terms of biological role, cell division inhibitor that blocks the formation of polar Z ring septums. Rapidly oscillates between the poles of the cell to destabilize FtsZ filaments that have formed before they mature into polar Z rings. Prevents FtsZ polymerization. The chain is Probable septum site-determining protein MinC from Agrobacterium fabrum (strain C58 / ATCC 33970) (Agrobacterium tumefaciens (strain C58)).